A 563-amino-acid polypeptide reads, in one-letter code: BOS complex subunit NCLN (563 aa).

The first 42 residues, 1-42 (MLEEAGEVLENVLKASCLPLGFIVFLPAVLLLVAPPLPAADA), serve as a signal peptide directing secretion. Residues 43–522 (AHEFTVYRMQ…VMNAYRVKPA (480 aa)) are Lumenal-facing. N-linked (GlcNAc...) asparagine glycans are attached at residues asparagine 241 and asparagine 428. Residues 523–543 (IFDLLLALCIGAYLGMAYTAV) form a helical membrane-spanning segment. Topologically, residues 544 to 563 (QHFHVLYKTVQRLLLKAKAQ) are cytoplasmic.

Belongs to the nicastrin family. As to quaternary structure, component of the back of Sec61 (BOS) complex, composed of NCLN/Nicalin, NOMO1 and TMEM147. The BOS complex is part of the multi-pass translocon (MPT) complex, composed of three subcomplexes, the GEL complex (composed of RAB5IF/OPTI and TMCO1), the BOS complex (composed of NCLN/Nicalin, NOMO1 and TMEM147) and the PAT complex (composed of WDR83OS/Asterix and CCDC47). The MPT complex associates with the SEC61 complex.

The protein resides in the endoplasmic reticulum membrane. In terms of biological role, component of the multi-pass translocon (MPT) complex that mediates insertion of multi-pass membrane proteins into the lipid bilayer of membranes. The MPT complex takes over after the SEC61 complex: following membrane insertion of the first few transmembrane segments of proteins by the SEC61 complex, the MPT complex occludes the lateral gate of the SEC61 complex to promote insertion of subsequent transmembrane regions. May antagonize Nodal signaling and subsequent organization of axial structures during mesodermal patterning, via its interaction with NOMO. In Rattus norvegicus (Rat), this protein is BOS complex subunit NCLN (Ncln).